The sequence spans 90 residues: RING finger protein Z (90 aa).

Gly-2 is lipidated: N-myristoyl glycine; by host. The segment at 32–68 (CKSCWQKFDSLVRCHDHYLCRHCLNLLLSVSDRCPLC) adopts an RING-type; atypical zinc-finger fold. Residues 85–88 (PPPY) carry the PPXY motif motif.

Belongs to the arenaviridae Z protein family. In terms of assembly, interacts with protein NP; this interaction probably directs the encapsidated genome to budding sites. Interacts (via RING-type zinc finger) with polymerase L; this interaction inhibits viral transcription and replication, Z partially blocks the product exit tunnel for the releasing nascent RNA product. Interacts with the glycoprotein complex; this interaction plays a role in virion budding. Interacts (via RING-type zinc finger) with host EIF4E; this interaction results in conformational changes of both interacting proteins and reduces EIF4E affinity for its substrate, the 5'-m7 G cap structure. Interacts (via late-budding domain) with host TSG101; this interaction is essential for budding and release of viral particles. Interacts with host RPLP0; this interaction may serve to load ribosome-like particles inside the virion. Interacts with host PML; this interaction induces PML bodies redistribution in the cytoplasm upon viral infection. In terms of processing, myristoylation is required for the role of RING finger protein Z in assembly and budding.

The protein localises to the virion. Its subcellular location is the host cytoplasm. It localises to the host perinuclear region. It is found in the host cell membrane. Its function is as follows. Plays a crucial role in virion assembly and budding. Expressed late in the virus life cycle, it acts as an inhibitor of viral transcription and RNA synthesis by interacting with the viral polymerase L. Presumably recruits the NP encapsidated genome to cellular membranes at budding sites via direct interaction with NP. Plays critical roles in the final steps of viral release by interacting with host TSG101, a member of the vacuolar protein-sorting pathway and using other cellular host proteins involved in vesicle formation pathway. The budding of the virus progeny occurs after association of protein Z with the viral glycoprotein complex SSP-GP1-GP2 at the cell periphery, step that requires myristoylation of protein Z. Also selectively represses protein production by associating with host EIF4E. In cell-based minigenome assay, has an inhibitory effect on the ribonucleoprotein machinery (vRNP), which is responsible for the replication and transcription of the viral genome. This Homo sapiens (Human) protein is RING finger protein Z.